Reading from the N-terminus, the 184-residue chain is Rhox homeobox family member 1 (184 aa).

Positions 26–104 (QLGAASSAEG…GPQPENMQPR (79 aa)) are disordered. Over residues 88 to 99 (PAQAAMEGPQPE) the composition is skewed to low complexity. A DNA-binding region (homeobox) is located at residues 103–162 (PRTRRTKFTLLQVEELESVFRHTQYPDVPTRRELAENLGVTEDKVRVWFKNKRARCRRHQ). The Nuclear localization signal signature appears at 155–164 (RARCRRHQRE).

It belongs to the paired-like homeobox family. PEPP subfamily. As to quaternary structure, does not interact with itself. Ovary, testis and epididymis. Also detected in the prostate and the mammary gland. Expressed in many tumor cell lines derived from acute lymphocytic leukemia, prostate, endometrial adenocarcinoma, melanoma, bladder carcinoma, colon carcinoma, erythroleukemia and breast carcinoma. Not expressed in placenta. In testis, mainly expressed in germ cells, but also detected in somatic cells such as Sertoli cells, Leydig cells and peritubular cells.

Its subcellular location is the nucleus. Functionally, transcription factor maybe involved in reproductive processes. Modulates expression of target genes encoding proteins involved in processes relevant to spermatogenesis. This Homo sapiens (Human) protein is Rhox homeobox family member 1.